A 1263-amino-acid chain; its full sequence is Kinesin-like protein KIN-12E (1263 aa).

The segment at 21–44 is disordered; that stretch reads PAPSESLRSVPCTPEANTVSRDNH. The segment covering 35 to 44 has biased composition (polar residues); sequence EANTVSRDNH. The region spanning 93-430 is the Kinesin motor domain; that stretch reads NVQVIIRTRP…LKFAQRAKLI (338 aa). 174–181 is a binding site for ATP; sequence GQTGSGKT. Coiled coils occupy residues 679-737, 764-805, 831-881, 905-966, 1091-1168, and 1193-1251; these read SKKL…KIRS, AEAH…AEEN, ALEV…KRLL, SEKS…HQSE, TDLL…TIQE, and LRKE…VLSL.

The protein belongs to the TRAFAC class myosin-kinesin ATPase superfamily. Kinesin family. KIN-12 subfamily.

This Arabidopsis thaliana (Mouse-ear cress) protein is Kinesin-like protein KIN-12E.